The chain runs to 205 residues: MEEKQPQKTKEPSKEDEPQQKEMPTHLSLGAESKAEAKTPVLVETQTVDNANEKSEKPPENQKKLSDKDTVATKIQAWWRGTLVRRALLHAALSACIIQCWWRLILSKILKKRRQAALEAFSRKEWAAVTLQSQARMWRIRRRYCQVLNAVRIIQAYWRCRSCASRGFIKGQYRVTANQLHLQLEILLDSGPCIVTECIPFSIKE.

2 stretches are compositionally biased toward basic and acidic residues: residues methionine 1 to proline 24 and alanine 51 to lysine 68. Positions methionine 1–lysine 68 are disordered. 2 IQ domains span residues lysine 68–isoleucine 97 and lysine 124–isoleucine 153.

Interacts with calmodulin.

Its subcellular location is the cytoplasmic vesicle. It localises to the secretory vesicle. The protein resides in the acrosome. Its function is as follows. Involved in sperm capacitation and acrosome reaction. The protein is IQ domain-containing protein F1 of Homo sapiens (Human).